Here is a 482-residue protein sequence, read N- to C-terminus: Glycogen synthase (482 aa).

An ADP-alpha-D-glucose-binding site is contributed by K21.

This sequence belongs to the glycosyltransferase 1 family. Bacterial/plant glycogen synthase subfamily.

The catalysed reaction is [(1-&gt;4)-alpha-D-glucosyl](n) + ADP-alpha-D-glucose = [(1-&gt;4)-alpha-D-glucosyl](n+1) + ADP + H(+). It participates in glycan biosynthesis; glycogen biosynthesis. Functionally, synthesizes alpha-1,4-glucan chains using ADP-glucose. The sequence is that of Glycogen synthase from Clostridium perfringens (strain 13 / Type A).